The primary structure comprises 525 residues: GMP synthase [glutamine-hydrolyzing] (525 aa).

In terms of domain architecture, Glutamine amidotransferase type-1 spans 9–207 (RILILDFGSQ…VLDICRCTPL (199 aa)). Residue Cys86 is the Nucleophile of the active site. Active-site residues include His181 and Glu183. In terms of domain architecture, GMPS ATP-PPase spans 208–400 (WTPAKIIEDA…LGLPYDMLYR (193 aa)). 235-241 (SGGVDSS) provides a ligand contact to ATP.

In terms of assembly, homodimer.

It catalyses the reaction XMP + L-glutamine + ATP + H2O = GMP + L-glutamate + AMP + diphosphate + 2 H(+). It participates in purine metabolism; GMP biosynthesis; GMP from XMP (L-Gln route): step 1/1. Its function is as follows. Catalyzes the synthesis of GMP from XMP. The polypeptide is GMP synthase [glutamine-hydrolyzing] (Sodalis glossinidius (strain morsitans)).